Here is a 301-residue protein sequence, read N- to C-terminus: Probable alpha-L-glutamate ligase (301 aa).

The 184-residue stretch at 104 to 287 (LQLLSRKGIG…VAGMIIQYLE (184 aa)) folds into the ATP-grasp domain. ATP-binding positions include Lys-141, 178–179 (EY), Asp-187, and 211–213 (RSN). Mg(2+) is bound by residues Asp-248, Glu-260, and Asn-262. Asp-248, Glu-260, and Asn-262 together coordinate Mn(2+).

It belongs to the RimK family. Requires Mg(2+) as cofactor. The cofactor is Mn(2+).

This chain is Probable alpha-L-glutamate ligase, found in Ectopseudomonas mendocina (strain ymp) (Pseudomonas mendocina).